We begin with the raw amino-acid sequence, 154 residues long: Aspartate carbamoyltransferase regulatory chain (154 aa).

Cys-109, Cys-114, Cys-138, and Cys-141 together coordinate Zn(2+).

The protein belongs to the PyrI family. Contains catalytic and regulatory chains. Zn(2+) serves as cofactor.

In terms of biological role, involved in allosteric regulation of aspartate carbamoyltransferase. The sequence is that of Aspartate carbamoyltransferase regulatory chain from Yersinia pestis.